A 414-amino-acid chain; its full sequence is Diaminopimelate decarboxylase (414 aa).

Position 52 is an N6-(pyridoxal phosphate)lysine (K52). Pyridoxal 5'-phosphate-binding positions include G231 and 265-268 (EPGR). 3 residues coordinate substrate: R268, R304, and Y308. Catalysis depends on C334, which acts as the Proton donor. Residues E335 and Y362 each coordinate substrate. Y362 contributes to the pyridoxal 5'-phosphate binding site.

It belongs to the Orn/Lys/Arg decarboxylase class-II family. LysA subfamily. Homodimer. Requires pyridoxal 5'-phosphate as cofactor.

It carries out the reaction meso-2,6-diaminopimelate + H(+) = L-lysine + CO2. It functions in the pathway amino-acid biosynthesis; L-lysine biosynthesis via DAP pathway; L-lysine from DL-2,6-diaminopimelate: step 1/1. In terms of biological role, specifically catalyzes the decarboxylation of meso-diaminopimelate (meso-DAP) to L-lysine. This Neisseria meningitidis serogroup B (strain ATCC BAA-335 / MC58) protein is Diaminopimelate decarboxylase.